The primary structure comprises 339 residues: DNA-directed RNA polymerase subunit alpha (339 aa).

The interval Met-1–Glu-235 is alpha N-terminal domain (alpha-NTD). Residues Phe-251–Tyr-339 are alpha C-terminal domain (alpha-CTD).

It belongs to the RNA polymerase alpha chain family. As to quaternary structure, homodimer. The RNAP catalytic core consists of 2 alpha, 1 beta, 1 beta' and 1 omega subunit. When a sigma factor is associated with the core the holoenzyme is formed, which can initiate transcription.

It catalyses the reaction RNA(n) + a ribonucleoside 5'-triphosphate = RNA(n+1) + diphosphate. In terms of biological role, DNA-dependent RNA polymerase catalyzes the transcription of DNA into RNA using the four ribonucleoside triphosphates as substrates. This chain is DNA-directed RNA polymerase subunit alpha, found in Rhodopseudomonas palustris (strain ATCC BAA-98 / CGA009).